Reading from the N-terminus, the 61-residue chain is Photosystem II reaction center protein K (61 aa).

Positions 1-24 (MLNIFSLICICLNSALHSSSFFFA) are excised as a propeptide. A helical membrane pass occupies residues 32–52 (FFNPIVDFMPVIPVLFFLLAL).

This sequence belongs to the PsbK family. PSII is composed of 1 copy each of membrane proteins PsbA, PsbB, PsbC, PsbD, PsbE, PsbF, PsbH, PsbI, PsbJ, PsbK, PsbL, PsbM, PsbT, PsbX, PsbY, PsbZ, Psb30/Ycf12, at least 3 peripheral proteins of the oxygen-evolving complex and a large number of cofactors. It forms dimeric complexes.

The protein resides in the plastid. It is found in the chloroplast thylakoid membrane. Functionally, one of the components of the core complex of photosystem II (PSII). PSII is a light-driven water:plastoquinone oxidoreductase that uses light energy to abstract electrons from H(2)O, generating O(2) and a proton gradient subsequently used for ATP formation. It consists of a core antenna complex that captures photons, and an electron transfer chain that converts photonic excitation into a charge separation. This is Photosystem II reaction center protein K from Drimys granadensis.